The sequence spans 2715 residues: Chromodomain-helicase-DNA-binding protein 6 (2715 aa).

Over residues 1–11 the composition is skewed to basic and acidic residues; the sequence is MKMKIQKKEKQ. Disordered stretches follow at residues 1–30 and 66–244; these read MKMKIQKKEKQLSNLKVLNHSPMSDASVNF and EEAA…QVKR. The interval 1-747 is required for DNA-dependent ATPase activity; sequence MKMKIQKKEK…MMELRKCCNH (747 aa). Over residues 12-27 the composition is skewed to polar residues; it reads LSNLKVLNHSPMSDAS. A compositionally biased stretch (basic and acidic residues) spans 123–172; that stretch reads EPKEPKEPRKAKEPKKAKEHKEPKQKDGAKKARKPREASGTKEAKEKRSC. Chromo domains lie at 292–343 and 375–439; these read NIIE…KDPR and VEVD…KHVE. The region spanning 473-647 is the Helicase ATP-binding domain; sequence LFNWYNRKNC…FSLLNFLEPS (175 aa). Residue 486-493 coordinates ATP; the sequence is DEMGLGKT. A DEAH box motif is present at residues 598–601; it reads DEAH. Residues 787–956 form the Helicase C-terminal domain; that stretch reads LIDKLLPKLI…LSKMEVEDLL (170 aa). The disordered stretch occupies residues 1318–1390; sequence KSLSAEQGVT…SDPDKSPWPV (73 aa). Polar residues predominate over residues 1321–1330; the sequence is SAEQGVTDGT. 2 stretches are compositionally biased toward basic and acidic residues: residues 1333–1351 and 1367–1376; these read IPERGNTDKEDNAEDKVDG and FSEKKDDSRA. The region spanning 1449 to 1503 is the Myb-like domain; that stretch reads RWTRREQADFYRTVSSFGVVYDQEKKTFDWTQFRIISRLDKKSDESLEQYFYSFV. The span at 2027-2038 shows a compositional bias: basic and acidic residues; sequence FENKDDYDRDGN. 6 disordered regions span residues 2027–2063, 2116–2148, 2321–2351, 2373–2422, 2547–2602, and 2648–2715; these read FENKDDYDRDGNCHSQDYPGKYSEEESKSSTSGITGD, SQQYEPSGTLPTPVLTSSAGSRTSLSEPEAAEH, QATLSTTHPEGPGPATSAPEPATAASSQAEK, PGFG…FLPE, TSTA…PAIT, and VGLE…NDTN. A compositionally biased stretch (polar residues) spans 2116 to 2141; the sequence is SQQYEPSGTLPTPVLTSSAGSRTSLS. A compositionally biased stretch (low complexity) spans 2329-2346; sequence PEGPGPATSAPEPATAAS. Residues 2547–2560 are compositionally biased toward low complexity; it reads TSTAPASLSSTTKS. Basic and acidic residues-rich tracts occupy residues 2567-2588 and 2706-2715; these read KTAEDKPSSHDVKTDTLAEDKP and ALKDSNNDTN.

The protein belongs to the SNF2/RAD54 helicase family. As to quaternary structure, interacts with NFE2L2; involved in activation of the transcription. In terms of assembly, (Microbial infection) Interacts with the influenza A polymerase complex composed fo PB1, PB2 and PA. (Microbial infection) Interacts (via N-terminus) with human papillomavirus protein E8^E2C (via C-terminus); this interaction induces transcriptional repression of the viral genome. Widely expressed.

The protein resides in the nucleus. The protein localises to the nucleoplasm. It catalyses the reaction ATP + H2O = ADP + phosphate + H(+). Its function is as follows. ATP-dependent chromatin-remodeling factor. Regulates transcription by disrupting nucleosomes in a largely non-sliding manner which strongly increases the accessibility of chromatin; nucleosome disruption requires ATP. Activates transcription of specific genes in response to oxidative stress through interaction with NFE2L2. Functionally, (Microbial infection) Acts as a transcriptional repressor of different viruses including influenza virus or papillomavirus. During influenza virus infection, the viral polymerase complex localizes CHD6 to inactive chromatin where it gets degraded in a proteasome independent-manner. This is Chromodomain-helicase-DNA-binding protein 6 (CHD6) from Homo sapiens (Human).